The chain runs to 711 residues: Quinolinate synthase, chloroplastic (711 aa).

A chloroplast-targeting transit peptide spans 1 to 41; it reads MDVSSLAAAAPSLVAPPLHHKPHLAFPPHHPSPARGSIGVR. Residues 17–63 are disordered; sequence PLHHKPHLAFPPHHPSPARGSIGVRCAHSPSPHPLRPSAATADEEVS. The Cysteine persulfide intermediate role is filled by cysteine 114. The iminosuccinate site is built by histidine 263 and serine 289. Cysteine 343 serves as a coordination point for [4Fe-4S] cluster. Iminosuccinate-binding positions include 372-374 and serine 394; that span reads YIN. Cysteine 467 lines the [4Fe-4S] cluster pocket. Iminosuccinate is bound by residues 493-495 and threonine 518; that span reads HFE. Cysteine 631 serves as a coordination point for [4Fe-4S] cluster.

It belongs to the quinolinate synthase family. Type 1 subfamily. In terms of assembly, homodimer. [4Fe-4S] cluster is required as a cofactor.

It is found in the plastid. The protein localises to the chloroplast. The enzyme catalyses iminosuccinate + dihydroxyacetone phosphate = quinolinate + phosphate + 2 H2O + H(+). It participates in cofactor biosynthesis; NAD(+) biosynthesis; quinolinate from iminoaspartate: step 1/1. Catalyzes the condensation of iminoaspartate with dihydroxyacetone phosphate to form quinolinate. This Oryza sativa subsp. japonica (Rice) protein is Quinolinate synthase, chloroplastic.